A 482-amino-acid chain; its full sequence is UDP-N-acetylmuramate--L-alanine ligase (482 aa).

G123–T129 contacts ATP.

The protein belongs to the MurCDEF family.

It localises to the cytoplasm. It catalyses the reaction UDP-N-acetyl-alpha-D-muramate + L-alanine + ATP = UDP-N-acetyl-alpha-D-muramoyl-L-alanine + ADP + phosphate + H(+). It functions in the pathway cell wall biogenesis; peptidoglycan biosynthesis. Cell wall formation. This chain is UDP-N-acetylmuramate--L-alanine ligase, found in Pseudomonas entomophila (strain L48).